The chain runs to 620 residues: MAAATADPGAGNPQAGDSSGGDSGGGLPSPGEQELSRRLQRLYPAVNQHETPLPRSWSPKDKYNYIGLSQGNLRVHYKGHGKNHKDAASVRATHPIPAACGIYYFEVKIVSKGRDGYMGIGLSAQGVNMNRLPGWDKHSYGYHGDDGHSFCSSGTGQPYGPTFTTGDVIGCCVNLINGTCFYTKNGHSLGIAFTDLPANLYPTVGLQTPGEIVDANFGQQPFLFDIEDYMREWRAKVQGTVHGFPISARLGEWQAVLQNMVSSYLVHHGYCSTATAFARMTETPIQEEQASIKNRQKIQKLVLEGRVGEAIETTQRFYPGLLEHNPNLLFMLKCRQFVEMVNGTDSEVRSLSSRSPKSQDSYPGSPSLSPRHGPSSSHIHNTGADSPSCSNGVASTKNKQNHSKYPAPSSSSSSSSSSSSSSPSSVNYSESNSTDSTKSQPHSSTSNQETSDSEMEMEAEHYPNGVLESVSTRIVNGAYKHDDLQTDESSMDDGHPRRQLCGGNQAATERIILFGRELQALSEQLGREYGKNLAHTEMLQDAFSLLAYSDPWSCPVGHQLDPIQREPVCAALNSAILESQNLPKQPPLMLALGQASECLRLMARAGLGSCSFARVDDYLH.

The interval 1–38 (MAAATADPGAGNPQAGDSSGGDSGGGLPSPGEQELSRR) is disordered. A2 is modified (N-acetylalanine). Gly residues predominate over residues 18-28 (SSGGDSGGGLP). A B30.2/SPRY domain is found at 35–222 (LSRRLQRLYP…VDANFGQQPF (188 aa)). Residues 253 to 285 (WQAVLQNMVSSYLVHHGYCSTATAFARMTETPI) enclose the LisH domain. The 58-residue stretch at 291-348 (SIKNRQKIQKLVLEGRVGEAIETTQRFYPGLLEHNPNLLFMLKCRQFVEMVNGTDSEV) folds into the CTLH domain. Residues 347–398 (EVRSLSSRSPKSQDSYPGSPSLSPRHGPSSSHIHNTGADSPSCSNGVASTKN) show a composition bias toward polar residues. A disordered region spans residues 347-460 (EVRSLSSRSP…SDSEMEMEAE (114 aa)). A Phosphoserine modification is found at S361. Position 362 is a phosphotyrosine (Y362). Phosphoserine occurs at positions 365, 367, 369, and 422. The segment covering 409–436 (SSSSSSSSSSSSSSPSSVNYSESNSTDS) has biased composition (low complexity). Polar residues predominate over residues 437–450 (TKSQPHSSTSNQET). Residues S451 and S453 each carry the phosphoserine modification.

The protein belongs to the RANBP9/10 family. As to quaternary structure, may form homodimers. Identified in the CTLH complex that contains GID4, RANBP9 and/or RANBP10, MKLN1, MAEA, RMND5A (or alternatively its paralog RMND5B), GID8, ARMC8, WDR26 and YPEL5. Within this complex, MAEA, RMND5A (or alternatively its paralog RMND5B), GID8, WDR26, and RANBP9 and/or RANBP10 form the catalytic core, while GID4, MKLN1, ARMC8 and YPEL5 have ancillary roles. Interacts with RAN and RANBP9. Interacts with the HGF receptor MET. Interacts with AR. Interacts with TUBB1. Interacts with YPEL5. May interact with TUBB5. Interacts with DDX4. Expressed at highest levels in spleen and liver. Expressed in megakaryocytes and platelets (at protein level).

Its subcellular location is the cytoplasm. The protein resides in the nucleus. In terms of biological role, may act as an adapter protein to couple membrane receptors to intracellular signaling pathways. Core component of the CTLH E3 ubiquitin-protein ligase complex that selectively accepts ubiquitin from UBE2H and mediates ubiquitination and subsequent proteasomal degradation of the transcription factor HBP1. Enhances dihydrotestosterone-induced transactivation activity of AR, as well as dexamethasone-induced transactivation activity of NR3C1, but does not affect estrogen-induced transactivation. Acts as a guanine nucleotide exchange factor (GEF) for RAN GTPase. May play an essential role in hemostasis and in maintaining microtubule dynamics with respect to both platelet shape and function. In Mus musculus (Mouse), this protein is Ran-binding protein 10 (Ranbp10).